The primary structure comprises 146 residues: Ribonuclease H (146 aa).

An RNase H type-1 domain is found at Met1 to Arg141. Mg(2+) is bound by residues Asp9, Glu47, Asp69, and Asp133.

This sequence belongs to the RNase H family. Monomer. The cofactor is Mg(2+).

It is found in the cytoplasm. The catalysed reaction is Endonucleolytic cleavage to 5'-phosphomonoester.. Functionally, endonuclease that specifically degrades the RNA of RNA-DNA hybrids. This Solibacter usitatus (strain Ellin6076) protein is Ribonuclease H.